Reading from the N-terminus, the 310-residue chain is MEEKFKYSLRISWSYFLFLKQRIIHDRLTVSAGYMAYITLLSLVPLVTVLLSVLSQFPIFSGAGETVQEFVIQNFVPAASDAVEGSLKEFISNTGKMTAVGSGFLFVASVMLISAIDRSLNYIWRVKKKRRPMYSFSLYWMILTLGPLLVWASLAATSYVTSLNIMDDEIVSSFYRTLLGWLPIILSFSAFLGLYLLVPNKKIRVRHALVGAMSAGCLFEVSKVGFAQYITQFPSYEVIYGALAAVPILFVWIYLCWIIVLIGAEITASLGESDQWLIDKINTHVFDAENTVLTESKGLTESDSTDPKSK.

Helical transmembrane passes span 34–54 (YMAY…LSVL), 97–117 (MTAV…SAID), 136–156 (FSLY…SLAA), 178–198 (LLGW…YLLV), 207–227 (HALV…VGFA), and 242–262 (ALAA…IVLI).

The protein belongs to the UPF0761 family.

Its subcellular location is the cell inner membrane. The sequence is that of UPF0761 membrane protein VSAL_I2938 from Aliivibrio salmonicida (strain LFI1238) (Vibrio salmonicida (strain LFI1238)).